A 347-amino-acid polypeptide reads, in one-letter code: Protein POOR HOMOLOGOUS SYNAPSIS 1 (347 aa).

The protein resides in the cytoplasm. Required for accurate chromosome segregation in meiosis. Required for pairing to occur between homologous chromosomes. Acts in early recombination steps and ensures pairing fidelity and proper repair of meiotic DNA double-strand-breaks. Regulates recombination and pairing of homologous chromosomes during meiotic prophase by controlling transport of RAD50 from cytoplasm to the nucleus. May affect pairing of the gene-rich fraction of the genome rather than preventing pairing between repetitive DNA elements. This is Protein POOR HOMOLOGOUS SYNAPSIS 1 from Zea mays (Maize).